A 1418-amino-acid chain; its full sequence is Ankyrin repeat and fibronectin type-III domain-containing protein 1 (1418 aa).

Positions 119-236 (RDSVCSLPPP…DRGETPSLSE (118 aa)) are disordered. The span at 144 to 154 (PENTSINLSQC) shows a compositional bias: polar residues. Residues 171 to 186 (SASPTSSTPLRTTSTP) are compositionally biased toward low complexity. Over residues 223–236 (LRDHDRGETPSLSE) the composition is skewed to basic and acidic residues. ANK repeat units lie at residues 419–450 (QSSE…ELDL) and 456–485 (EGLT…KESP). The 97-residue stretch at 556-652 (APLMVRLSVT…LSQPPSAVPS (97 aa)) folds into the Fibronectin type-III domain. The tract at residues 893 to 900 (GLYLGYLK) is highly conserved peptide sequence. Disordered regions lie at residues 1134 to 1179 (VQKN…EVFL), 1321 to 1343 (LETP…YRQP), and 1361 to 1418 (KTSP…SSTL). A compositionally biased stretch (polar residues) spans 1136–1146 (KNDSTSSNTDY). Over residues 1407 to 1418 (NEQVSEILSSTL) the composition is skewed to polar residues.

In terms of biological role, required for vestibular-related functions. This Danio rerio (Zebrafish) protein is Ankyrin repeat and fibronectin type-III domain-containing protein 1 (ankfn1).